A 363-amino-acid chain; its full sequence is Jasmonate-induced oxygenase 3 (363 aa).

The 103-residue stretch at 210 to 312 (ESGGCLRVNY…RLSLAFFYNP (103 aa)) folds into the Fe2OG dioxygenase domain. Arginine 216 lines the jasmonate pocket. Residues asparagine 218 and tyrosine 220 each coordinate 2-oxoglutarate. Fe cation-binding residues include histidine 235, aspartate 237, and histidine 293. Residues arginine 303 and serine 305 each contribute to the 2-oxoglutarate site. Residues arginine 342 and arginine 346 each coordinate jasmonate.

The protein belongs to the iron/ascorbate-dependent oxidoreductase family. It depends on L-ascorbate as a cofactor. Fe(2+) serves as cofactor.

The enzyme catalyses jasmonate + 2-oxoglutarate + O2 = (1R,2R)-12-hydroxyjasmonate + succinate + CO2. Functionally, 2-oxoglutarate-dependent dioxygenase involved in the oxidation of jasmonate (JA), a stress-induced phytohormone synthesized in response to attack by pathogens and herbivores, which triggers the activation of defense responses via the JA-mediated signaling pathway. Converts JA to 12-hydroxyjasmonate (12OH-JA), an inactive form of JA. Is specific to free JA, and cannot oxidize the bioactive form jasmonoyl-L-isoleucine (JA-Ile) or other JA-amino acid conjugates. Prevents over-accumulation of JA and indirectly its bioactive form JA-Ile under stress response. Acts as a negative regulator of JA-mediated defense signaling, by contributing to 12OH-JA accumulation, which represses JA defense responses upon infection by the fungal pathogen Botrytis cinerea. Acts as a negative regulator of JA-mediated defense responses upon infestation by the herbivorous caterpillar Mamestra brassicae. The polypeptide is Jasmonate-induced oxygenase 3 (Arabidopsis thaliana (Mouse-ear cress)).